A 696-amino-acid polypeptide reads, in one-letter code: Glycine--tRNA ligase beta subunit (696 aa).

This sequence belongs to the class-II aminoacyl-tRNA synthetase family. As to quaternary structure, tetramer of two alpha and two beta subunits.

The protein resides in the cytoplasm. It catalyses the reaction tRNA(Gly) + glycine + ATP = glycyl-tRNA(Gly) + AMP + diphosphate. In Oleidesulfovibrio alaskensis (strain ATCC BAA-1058 / DSM 17464 / G20) (Desulfovibrio alaskensis), this protein is Glycine--tRNA ligase beta subunit.